The primary structure comprises 77 residues: MIFIFISFLSLFFKWQRLMFILISLEFIVMSLFILFSGDLNEMMFFYFMCFSVVSSVLGMVVMVGNVKFYGSDLCLF.

2 consecutive transmembrane segments (helical) span residues 18–38 (LMFI…LFSG) and 44–64 (MFFY…VVMV).

This sequence belongs to the complex I subunit 4L family.

It localises to the mitochondrion membrane. It carries out the reaction a ubiquinone + NADH + 5 H(+)(in) = a ubiquinol + NAD(+) + 4 H(+)(out). Functionally, core subunit of the mitochondrial membrane respiratory chain NADH dehydrogenase (Complex I) that is believed to belong to the minimal assembly required for catalysis. Complex I functions in the transfer of electrons from NADH to the respiratory chain. The immediate electron acceptor for the enzyme is believed to be ubiquinone. This Ascaris suum (Pig roundworm) protein is NADH-ubiquinone oxidoreductase chain 4L (ND4L).